Consider the following 461-residue polypeptide: Phytase A (461 aa).

A disulfide bridge links Cys-22 with Cys-31. 1D-myo-inositol hexakisphosphate contacts are provided by Gln-41, Tyr-42, Arg-71, His-72, Arg-75, and Thr-78. Disulfide bonds link Cys-61/Cys-405, Cys-205/Cys-456, Cys-254/Cys-272, and Cys-427/Cys-435. The Nucleophile role is filled by His-72. N-linked (GlcNAc...) asparagine glycans are attached at residues Asn-95 and Asn-110. Arg-155 contacts 1D-myo-inositol hexakisphosphate. The N-linked (GlcNAc...) asparagine glycan is linked to Asn-197. Lys-291 contributes to the 1D-myo-inositol hexakisphosphate binding site. Residues Asn-329 and Asn-343 are each glycosylated (N-linked (GlcNAc...) asparagine). Positions 352 and 353 each coordinate 1D-myo-inositol hexakisphosphate. Residue Asn-367 is glycosylated (N-linked (GlcNAc...) asparagine).

Belongs to the histidine acid phosphatase family. As to quaternary structure, monomer. Post-translationally, glycosylated.

The protein resides in the secreted. It carries out the reaction 1D-myo-inositol hexakisphosphate + H2O = 1D-myo-inositol 1,2,4,5,6-pentakisphosphate + phosphate. It catalyses the reaction 1D-myo-inositol 1,2,4,5,6-pentakisphosphate + H2O = 1D-myo-inositol 1,2,5,6-tetrakisphosphate + phosphate. The enzyme catalyses 1D-myo-inositol 1,2,5,6-tetrakisphosphate + H2O = 1D-myo-inositol 1,2,6-trisphosphate + phosphate. The catalysed reaction is 1D-myo-inositol 1,2,6-trisphosphate + H2O = 1D-myo-inositol 1,2-bisphosphate + phosphate. It carries out the reaction 1D-myo-inositol 1,2-bisphosphate + H2O = 1D-myo-inositol 2-phosphate + phosphate. In terms of biological role, catalyzes the phosphate monoester hydrolysis of phytic acid (myo-inositol hexakisphosphate), which results in the stepwise formation of myo-inositol pentakis-, tetrakis-, tris-, bis-, and monophosphates, as well as the liberation of inorganic phosphate. Myo-inositol 2-monophosphate is the end product. The protein is Phytase A of Penicillium oxalicum.